We begin with the raw amino-acid sequence, 77 residues long: Sec-independent protein translocase protein TatA (77 aa).

The helical transmembrane segment at 1-21 (MGSFSIWHWLIVLVIVMLVFG) threads the bilayer. Residues 46–77 (GEGKAAADPAQSKELRDSTTIDVEAKEKTRQQ) form a disordered region.

Belongs to the TatA/E family. As to quaternary structure, the Tat system comprises two distinct complexes: a TatABC complex, containing multiple copies of TatA, TatB and TatC subunits, and a separate TatA complex, containing only TatA subunits. Substrates initially bind to the TatABC complex, which probably triggers association of the separate TatA complex to form the active translocon.

It localises to the cell inner membrane. Its function is as follows. Part of the twin-arginine translocation (Tat) system that transports large folded proteins containing a characteristic twin-arginine motif in their signal peptide across membranes. TatA could form the protein-conducting channel of the Tat system. The polypeptide is Sec-independent protein translocase protein TatA (Cupriavidus necator (strain ATCC 17699 / DSM 428 / KCTC 22496 / NCIMB 10442 / H16 / Stanier 337) (Ralstonia eutropha)).